Reading from the N-terminus, the 288-residue chain is Putative N-terminal acetyltransferase 2 (288 aa).

The tract at residues 68-90 (TEEKSSQFDENKSKSNNGKKNEP) is disordered.

In terms of assembly, heterooligomeric.

It localises to the cytoplasm. Functionally, maybe involved in N-terminal acetylation of proteins. N-acetylation plays a role in normal eukaryotic translation and processing, protect against proteolytic degradation and protein turnover. The polypeptide is Putative N-terminal acetyltransferase 2 (NAT2) (Saccharomyces cerevisiae (strain ATCC 204508 / S288c) (Baker's yeast)).